The following is a 759-amino-acid chain: Glycerol-3-phosphate O-acyltransferase 1 (759 aa).

The Lumenal segment spans residues 1 to 48 (MPAPKLTEKFASSKSTQKTTNYSSIEAKSVKTSADQAYIYQEPSATKK). Residues 49-69 (ILYSIATWLLYNIFHCFFREI) form a helical membrane-spanning segment. Residues 70-434 (RGRGSFKVPQ…AKVNFAKNLG (365 aa)) are Cytoplasmic-facing. The short motif at 414–419 (HYNLPD) is the HXXXXD motif element. Residues 435–449 (LVFFRSIGLCILFSL) traverse the membrane as a helical segment. Alanine 450 is a topological domain (lumenal). The helical transmembrane segment at 451-465 (MPGIIMFSPVFILAK) threads the bilayer. Over 466–493 (RISQEKARTALSKSTVKIKANDVIATWK) the chain is Cytoplasmic. A helical transmembrane segment spans residues 494-514 (ILIGMGFAPLLYIFWSVLITY). At 515–523 (YLRHKPWNK) the chain is on the lumenal side. Residues 524 to 544 (IYVFSGSYISCVIVTYSALIV) form a helical membrane-spanning segment. Topologically, residues 545 to 759 (GDIGMDGFKS…EEEEGKEGDA (215 aa)) are cytoplasmic. Disordered regions lie at residues 613-667 (EEDR…SLVN), 684-705 (RKSE…EFEV), and 729-759 (IGEN…EGDA). Over residues 647 to 659 (RDNHDAYEHHNQD) the composition is skewed to basic and acidic residues. Over residues 688–702 (SSLASTSVAPSSSSE) the composition is skewed to low complexity. Acidic residues predominate over residues 736-759 (EEEEEEEEEEEEEEEEEEGKEGDA).

This sequence belongs to the GPAT/DAPAT family.

The protein resides in the endoplasmic reticulum membrane. It carries out the reaction sn-glycerol 3-phosphate + an acyl-CoA = a 1-acyl-sn-glycero-3-phosphate + CoA. The enzyme catalyses dihydroxyacetone phosphate + an acyl-CoA = a 1-acylglycerone 3-phosphate + CoA. It catalyses the reaction sn-glycerol 3-phosphate + hexadecanoyl-CoA = 1-hexadecanoyl-sn-glycero-3-phosphate + CoA. The catalysed reaction is (9Z)-hexadecenoyl-CoA + sn-glycerol 3-phosphate = 1-(9Z-hexadecenoyl)-sn-glycero-3-phosphate + CoA. It carries out the reaction sn-glycerol 3-phosphate + octadecanoyl-CoA = 1-octadecanoyl-sn-glycero-3-phosphate + CoA. The enzyme catalyses sn-glycerol 3-phosphate + (9Z)-octadecenoyl-CoA = 1-(9Z-octadecenoyl)-sn-glycero-3-phosphate + CoA. It participates in phospholipid metabolism; CDP-diacylglycerol biosynthesis; CDP-diacylglycerol from sn-glycerol 3-phosphate: step 1/3. Functionally, dual substrate-specific glycerol-3-phosphate/dihydroxyacetone phosphate sn-1 acyltransferase, catalyzing the first and committed reaction in the de novo synthesis of glycerophospholipids and triacylglycerols (TAGs). Prefers Gly-3-P over dihydroxyacetone phosphate and has a marked preference for 16-carbon fatty acyl chains. Transfers a fatty acid from fatty acyl-CoA to the sn-1 position of glycerol-3-phosphate to produce lysophosphatidic acid (LysoPA). These lipids not only are precursors of glycerolipids, but also are dynamic components of signal transduction systems that control cell physiology. SCT1 is the primary supplier of diacylglycerols (DAG), used mainly in TAG synthesis and phosphatidylcholine (PC) synthesis through the CDP-choline pathway. Regulates fatty acid desaturation, that is, the ratio of unsaturated versus saturated fatty acyl chains, by competing with the desaturase OLE1 for the common substrate C16:0-CoA. Sequesters C16:0-CoA into lipids, thereby shielding it from desaturation by OLE1. The chain is Glycerol-3-phosphate O-acyltransferase 1 from Saccharomyces cerevisiae (strain ATCC 204508 / S288c) (Baker's yeast).